We begin with the raw amino-acid sequence, 677 residues long: Methionine--tRNA ligase (677 aa).

Positions 15–25 (PYANGSIHLGH) match the 'HIGH' region motif. Cys146, Cys149, Cys159, and Cys162 together coordinate Zn(2+). Positions 333–337 (KMSKS) match the 'KMSKS' region motif. An ATP-binding site is contributed by Lys336. The tRNA-binding domain maps to 575–677 (DFAKVDLRVA…AGAKPGHQVK (103 aa)).

This sequence belongs to the class-I aminoacyl-tRNA synthetase family. MetG type 1 subfamily. Homodimer. Zn(2+) is required as a cofactor.

Its subcellular location is the cytoplasm. It carries out the reaction tRNA(Met) + L-methionine + ATP = L-methionyl-tRNA(Met) + AMP + diphosphate. Its function is as follows. Is required not only for elongation of protein synthesis but also for the initiation of all mRNA translation through initiator tRNA(fMet) aminoacylation. The protein is Methionine--tRNA ligase of Escherichia coli (strain UTI89 / UPEC).